Reading from the N-terminus, the 440-residue chain is Histidinol dehydrogenase (440 aa).

Residues Y133, Q194, and N217 each contribute to the NAD(+) site. Positions 240, 262, and 265 each coordinate substrate. The Zn(2+) site is built by Q262 and H265. Active-site proton acceptor residues include E330 and H331. H331, D364, E418, and H423 together coordinate substrate. D364 contacts Zn(2+). Residue H423 participates in Zn(2+) binding.

The protein belongs to the histidinol dehydrogenase family. It depends on Zn(2+) as a cofactor.

It catalyses the reaction L-histidinol + 2 NAD(+) + H2O = L-histidine + 2 NADH + 3 H(+). It participates in amino-acid biosynthesis; L-histidine biosynthesis; L-histidine from 5-phospho-alpha-D-ribose 1-diphosphate: step 9/9. In terms of biological role, catalyzes the sequential NAD-dependent oxidations of L-histidinol to L-histidinaldehyde and then to L-histidine. The chain is Histidinol dehydrogenase from Nitrosospira multiformis (strain ATCC 25196 / NCIMB 11849 / C 71).